We begin with the raw amino-acid sequence, 352 residues long: Phosphoribosylformylglycinamidine cyclo-ligase (352 aa).

Belongs to the AIR synthase family.

Its subcellular location is the cytoplasm. It catalyses the reaction 2-formamido-N(1)-(5-O-phospho-beta-D-ribosyl)acetamidine + ATP = 5-amino-1-(5-phospho-beta-D-ribosyl)imidazole + ADP + phosphate + H(+). It participates in purine metabolism; IMP biosynthesis via de novo pathway; 5-amino-1-(5-phospho-D-ribosyl)imidazole from N(2)-formyl-N(1)-(5-phospho-D-ribosyl)glycinamide: step 2/2. This chain is Phosphoribosylformylglycinamidine cyclo-ligase, found in Pseudomonas putida (strain GB-1).